The following is a 147-amino-acid chain: Large ribosomal subunit protein uL13 (147 aa).

Residues 127 to 147 are disordered; it reads GPEHPHSAQQPKVLEIQGAAR.

The protein belongs to the universal ribosomal protein uL13 family. Part of the 50S ribosomal subunit.

This protein is one of the early assembly proteins of the 50S ribosomal subunit, although it is not seen to bind rRNA by itself. It is important during the early stages of 50S assembly. This Verminephrobacter eiseniae (strain EF01-2) protein is Large ribosomal subunit protein uL13.